The sequence spans 347 residues: Phenylalanine--tRNA ligase alpha subunit (347 aa).

E261 provides a ligand contact to Mg(2+).

The protein belongs to the class-II aminoacyl-tRNA synthetase family. Phe-tRNA synthetase alpha subunit type 1 subfamily. In terms of assembly, tetramer of two alpha and two beta subunits. Mg(2+) is required as a cofactor.

The protein localises to the cytoplasm. It carries out the reaction tRNA(Phe) + L-phenylalanine + ATP = L-phenylalanyl-tRNA(Phe) + AMP + diphosphate + H(+). The polypeptide is Phenylalanine--tRNA ligase alpha subunit (Streptococcus pyogenes serotype M3 (strain ATCC BAA-595 / MGAS315)).